The primary structure comprises 81 residues: MAQQRRGGFKRRKKVDFIAANKIEVVDYKDTELLKRFISERGKILPRRVTGTSAKNQRKVVNAIKRARVMALLPFVAEDQN.

Belongs to the bacterial ribosomal protein bS18 family. In terms of assembly, part of the 30S ribosomal subunit. Forms a tight heterodimer with protein bS6.

Its function is as follows. Binds as a heterodimer with protein bS6 to the central domain of the 16S rRNA, where it helps stabilize the platform of the 30S subunit. This chain is Small ribosomal subunit protein bS18, found in Lactococcus lactis subsp. cremoris (strain MG1363).